The primary structure comprises 285 residues: Probable endonuclease 4 (285 aa).

The Zn(2+) site is built by histidine 69, histidine 109, glutamate 145, aspartate 179, histidine 182, histidine 216, aspartate 229, histidine 231, and glutamate 261.

This sequence belongs to the AP endonuclease 2 family. It depends on Zn(2+) as a cofactor.

It carries out the reaction Endonucleolytic cleavage to 5'-phosphooligonucleotide end-products.. Functionally, endonuclease IV plays a role in DNA repair. It cleaves phosphodiester bonds at apurinic or apyrimidinic (AP) sites, generating a 3'-hydroxyl group and a 5'-terminal sugar phosphate. This Salmonella newport (strain SL254) protein is Probable endonuclease 4.